The following is a 220-amino-acid chain: StAR-related lipid transfer protein 6 (220 aa).

Positions 1 to 208 (MDFKAIAQQT…AKDGIKAHRT (208 aa)) constitute an START domain.

May be involved in the intracellular transport of sterols or other lipids. May bind cholesterol or other sterols. The chain is StAR-related lipid transfer protein 6 (STARD6) from Homo sapiens (Human).